Consider the following 276-residue polypeptide: Chlorophyll a-b binding protein CP29.3, chloroplastic (276 aa).

The N-terminal 29 residues, 1–29 (MATTTAAAASGIFGIRIQDPRPGTGRVQA), are a transit peptide targeting the chloroplast. The interval 1-53 (MATTTAAAASGIFGIRIQDPRPGTGRVQARFGFSFGKKKPAPPPKKSRQVQDD) is disordered. The span at 36–48 (GKKKPAPPPKKSR) shows a compositional bias: basic residues. Position 59 (Trp-59) interacts with chlorophyll b. Residues Phe-79, Glu-141, and His-144 each contribute to the chlorophyll a site. A helical membrane pass occupies residues 147–167 (WAMLGTLGAIAVEALTGIAWQ). Leu-181 contacts chlorophyll a. Residues 185–205 (LPFSLTTLIWIEVLVVGYIEF) traverse the membrane as a helical segment. Residues Glu-204 and Arg-207 each coordinate chlorophyll b. 4 residues coordinate chlorophyll a: Glu-242, His-245, Arg-247, and Gln-259. Residues 248-268 (LAMVAFLIFALQAAFTGKGPV) traverse the membrane as a helical segment.

The protein belongs to the light-harvesting chlorophyll a/b-binding (LHC) protein family. In terms of assembly, the LHC complex consists of chlorophyll a-b binding proteins. Binds at least 14 chlorophylls (8 Chl-a and 6 Chl-b) and carotenoids such as lutein and neoxanthin. is required as a cofactor. In terms of processing, photoregulated by reversible phosphorylation of its threonine residues.

The protein resides in the plastid. The protein localises to the chloroplast thylakoid membrane. In terms of biological role, the light-harvesting complex (LHC) functions as a light receptor, it captures and delivers excitation energy to photosystems with which it is closely associated. This is Chlorophyll a-b binding protein CP29.3, chloroplastic (LHCB4.3) from Arabidopsis thaliana (Mouse-ear cress).